Here is a 312-residue protein sequence, read N- to C-terminus: Protein ABIL2 (312 aa).

The tract at residues 173 to 287 is disordered; that stretch reads TIRETPPPPV…TEQQQPSKSK (115 aa). The segment covering 183-199 has biased composition (low complexity); that stretch reads RKSTSQSSSPRQPPQRS. Residues 230–251 show a composition bias toward polar residues; the sequence is SVATRKSASISRPTTPSKSRSI. Basic and acidic residues predominate over residues 269–279; the sequence is AFEKDNQKETE.

It belongs to the ABI family. As to quaternary structure, binds SCAR.

Its subcellular location is the cytoplasm. The protein resides in the cytoskeleton. Its function is as follows. Involved in regulation of actin and microtubule organization. Part of a WAVE complex that activates the Arp2/3 complex. The sequence is that of Protein ABIL2 (ABIL2) from Arabidopsis thaliana (Mouse-ear cress).